A 621-amino-acid polypeptide reads, in one-letter code: Auxin response factor 13 (621 aa).

Residues 124–228 constitute a DNA-binding region (TF-B3); sequence FSKILTASDV…ELRFGIRRAK (105 aa). The region spanning 508–600 is the PB1 domain; it reads RSRIKVHMQG…EIKKMKLKNK (93 aa).

Belongs to the ARF family. As to quaternary structure, homodimers and heterodimers.

The protein resides in the nucleus. Auxin response factors (ARFs) are transcriptional factors that bind specifically to the DNA sequence 5'-TGTCTC-3' found in the auxin-responsive promoter elements (AuxREs). Could act as transcriptional activator or repressor. Formation of heterodimers with Aux/IAA proteins may alter their ability to modulate early auxin response genes expression. The sequence is that of Auxin response factor 13 (ARF13) from Arabidopsis thaliana (Mouse-ear cress).